Here is a 274-residue protein sequence, read N- to C-terminus: 2,3,4,5-tetrahydropyridine-2,6-dicarboxylate N-succinyltransferase (274 aa).

This sequence belongs to the transferase hexapeptide repeat family.

It is found in the cytoplasm. It carries out the reaction (S)-2,3,4,5-tetrahydrodipicolinate + succinyl-CoA + H2O = (S)-2-succinylamino-6-oxoheptanedioate + CoA. The protein operates within amino-acid biosynthesis; L-lysine biosynthesis via DAP pathway; LL-2,6-diaminopimelate from (S)-tetrahydrodipicolinate (succinylase route): step 1/3. The protein is 2,3,4,5-tetrahydropyridine-2,6-dicarboxylate N-succinyltransferase of Proteus mirabilis (strain HI4320).